A 473-amino-acid chain; its full sequence is Siroheme synthase (473 aa).

The interval 1 to 203 is precorrin-2 dehydrogenase /sirohydrochlorin ferrochelatase; sequence MTLFPIFADL…QQPGLAEQEL (203 aa). Residues 22–23 and 43–44 contribute to the NAD(+) site; these read AV and PR. Ser-128 bears the Phosphoserine mark. A uroporphyrinogen-III C-methyltransferase region spans residues 216–473; sequence GSVVLVGAGP…GLPGPQALAA (258 aa). S-adenosyl-L-methionine is bound at residue Pro-225. Asp-248 functions as the Proton acceptor in the catalytic mechanism. The active-site Proton donor is Lys-270. S-adenosyl-L-methionine-binding positions include 302-304, Ile-307, 332-333, Met-384, and Gly-413; these read GGD and TA.

It in the N-terminal section; belongs to the precorrin-2 dehydrogenase / sirohydrochlorin ferrochelatase family. The protein in the C-terminal section; belongs to the precorrin methyltransferase family.

It carries out the reaction uroporphyrinogen III + 2 S-adenosyl-L-methionine = precorrin-2 + 2 S-adenosyl-L-homocysteine + H(+). The catalysed reaction is precorrin-2 + NAD(+) = sirohydrochlorin + NADH + 2 H(+). The enzyme catalyses siroheme + 2 H(+) = sirohydrochlorin + Fe(2+). It participates in cofactor biosynthesis; adenosylcobalamin biosynthesis; precorrin-2 from uroporphyrinogen III: step 1/1. Its pathway is cofactor biosynthesis; adenosylcobalamin biosynthesis; sirohydrochlorin from precorrin-2: step 1/1. The protein operates within porphyrin-containing compound metabolism; siroheme biosynthesis; precorrin-2 from uroporphyrinogen III: step 1/1. It functions in the pathway porphyrin-containing compound metabolism; siroheme biosynthesis; siroheme from sirohydrochlorin: step 1/1. It participates in porphyrin-containing compound metabolism; siroheme biosynthesis; sirohydrochlorin from precorrin-2: step 1/1. Multifunctional enzyme that catalyzes the SAM-dependent methylations of uroporphyrinogen III at position C-2 and C-7 to form precorrin-2 via precorrin-1. Then it catalyzes the NAD-dependent ring dehydrogenation of precorrin-2 to yield sirohydrochlorin. Finally, it catalyzes the ferrochelation of sirohydrochlorin to yield siroheme. This chain is Siroheme synthase, found in Bordetella pertussis (strain Tohama I / ATCC BAA-589 / NCTC 13251).